We begin with the raw amino-acid sequence, 315 residues long: Methionyl-tRNA formyltransferase (315 aa).

110–113 (SLLP) serves as a coordination point for (6S)-5,6,7,8-tetrahydrofolate.

Belongs to the Fmt family.

The catalysed reaction is L-methionyl-tRNA(fMet) + (6R)-10-formyltetrahydrofolate = N-formyl-L-methionyl-tRNA(fMet) + (6S)-5,6,7,8-tetrahydrofolate + H(+). In terms of biological role, attaches a formyl group to the free amino group of methionyl-tRNA(fMet). The formyl group appears to play a dual role in the initiator identity of N-formylmethionyl-tRNA by promoting its recognition by IF2 and preventing the misappropriation of this tRNA by the elongation apparatus. This Mycolicibacterium paratuberculosis (strain ATCC BAA-968 / K-10) (Mycobacterium paratuberculosis) protein is Methionyl-tRNA formyltransferase.